The sequence spans 356 residues: GMP reductase (356 aa).

NADP(+)-binding positions include 26 to 27 (SR), lysine 78, 132 to 134 (DVA), and 183 to 184 (IG). Residues glycine 184, glycine 186, and cysteine 189 each contribute to the K(+) site. The active-site Thioimidate intermediate is the cysteine 189. Catalysis depends on threonine 191, which acts as the Proton donor/acceptor. Arginine 192 serves as a coordination point for K(+). Residues 222–224 (DGG), 245–246 (GG), 271–273 (GMS), and 289–293 (RASEG) each bind GMP. Residues methionine 272, 288-289 (YR), and 317-320 (SACT) each bind NADP(+).

Belongs to the IMPDH/GMPR family.

It catalyses the reaction IMP + NH4(+) + NADP(+) = GMP + NADPH + 2 H(+). Functionally, catalyzes the irreversible NADPH-dependent deamination of GMP to IMP. It functions in the conversion of nucleobase, nucleoside and nucleotide derivatives of G to A nucleotides, and in maintaining the intracellular balance of A and G nucleotides. This is GMP reductase from Ascaris suum (Pig roundworm).